The chain runs to 358 residues: GDSL esterase/lipase At2g30220 (358 aa).

Residues 1-22 (MYISKTIVFGLFVATLLVSCNA) form the signal peptide. A glycan (N-linked (GlcNAc...) asparagine) is linked at N25. The Nucleophile role is filled by S40. Residues N102 and N324 are each glycosylated (N-linked (GlcNAc...) asparagine). Active-site residues include D332 and H335.

The protein belongs to the 'GDSL' lipolytic enzyme family.

Its subcellular location is the secreted. The polypeptide is GDSL esterase/lipase At2g30220 (Arabidopsis thaliana (Mouse-ear cress)).